The sequence spans 505 residues: Trans-cinnamate 4-monooxygenase (505 aa).

Residues 3–23 (LLLLEKTLLALFLAAITAITI) form a helical membrane-spanning segment. Residues 213–218 (RSRLAQ) and A306 contribute to the (E)-cinnamate site. A heme-binding site is contributed by C447.

This sequence belongs to the cytochrome P450 family. The cofactor is heme.

It is found in the membrane. The enzyme catalyses (E)-cinnamate + reduced [NADPH--hemoprotein reductase] + O2 = (E)-4-coumarate + oxidized [NADPH--hemoprotein reductase] + H2O + H(+). It functions in the pathway phenylpropanoid metabolism; trans-4-coumarate biosynthesis; trans-4-coumarate from trans-cinnamate: step 1/1. Its function is as follows. Catalyzes the first oxidative step of the phenylpropanoid pathway in higher plants by transforming trans-cinnamate into p-coumarate. The compounds formed by this pathway are essential components for lignification, pollination, and defense against ultraviolet light, predators and pathogens. The chain is Trans-cinnamate 4-monooxygenase (CYP73A9) from Pisum sativum (Garden pea).